The chain runs to 93 residues: WAP four-disulfide core domain protein 13 (93 aa).

A signal peptide spans methionine 1–glycine 22. Residues proline 24 to glutamate 73 form the WAP; atypical domain. 3 disulfides stabilise this stretch: cysteine 45–cysteine 66, cysteine 49–cysteine 61, and cysteine 55–cysteine 70.

It is found in the secreted. Its function is as follows. Putative acid-stable proteinase inhibitor. This chain is WAP four-disulfide core domain protein 13 (WFDC13), found in Homo sapiens (Human).